The following is a 68-amino-acid chain: Large ribosomal subunit protein bL33c (68 aa).

The protein belongs to the bacterial ribosomal protein bL33 family.

It is found in the plastid. The protein localises to the chloroplast. This Nymphaea alba (White water-lily) protein is Large ribosomal subunit protein bL33c.